Here is a 562-residue protein sequence, read N- to C-terminus: Glucan 1,3-beta-glucosidase 2 (562 aa).

The first 22 residues, 1–22, serve as a signal peptide directing secretion; the sequence is MPLKSFFFSAFLVLCLSKFTQG. 7 N-linked (GlcNAc...) asparagine glycosylation sites follow: N50, N77, N86, N90, N106, N157, and N220. E254 (proton donor) is an active-site residue. N-linked (GlcNAc...) asparagine glycosylation is found at N281, N285, N310, N317, and N322. Residue H334 is the Nucleophile of the active site. N-linked (GlcNAc...) asparagine glycans are attached at residues N401, N480, and N539.

Belongs to the glycosyl hydrolase 5 (cellulase A) family.

The protein localises to the cell membrane. It carries out the reaction Successive hydrolysis of beta-D-glucose units from the non-reducing ends of (1-&gt;3)-beta-D-glucans, releasing alpha-glucose.. The chain is Glucan 1,3-beta-glucosidase 2 (EXG2) from Saccharomyces cerevisiae (strain ATCC 204508 / S288c) (Baker's yeast).